The primary structure comprises 125 residues: uncharacterized protein (125 aa).

Disordered regions lie at residues Met1–Ser27 and Asn76–Lys125. Residues Gly18–Ser27 show a composition bias toward low complexity.

This is an uncharacterized protein from Dictyostelium discoideum (Social amoeba).